Consider the following 1274-residue polypeptide: VWFA and cache domain-containing protein 1 (1274 aa).

The first 35 residues, 1-35 (MARQPEEEETAVARARRPPLWLLCLVACWLLGAGA), serve as a signal peptide directing secretion. At 36–1095 (EADFSILDEA…ITLNMIKSAP (1060 aa)) the chain is on the extracellular side. N-linked (GlcNAc...) asparagine glycosylation occurs at Asn-145. Residues 228 to 443 (HIVVILDHGA…TTVGRFYTNL (216 aa)) enclose the VWFA domain. Cache domains lie at 453-532 (FSLP…SEPP) and 772-853 (LTGP…HPTL). The helical transmembrane segment at 1096 to 1116 (VGPVAGGIMGCIMVLVLAVYA) threads the bilayer. The Cytoplasmic portion of the chain corresponds to 1117–1274 (YRHQIHRRSH…VTVHTVDAEC (158 aa)). Residues 1179–1227 (PERRRRYWGRSGTESDHGYSTMSPQEDSENPPCNNDPLSAGVDVGNHDE) form a disordered region. Residues 1196–1215 (GYSTMSPQEDSENPPCNNDP) are compositionally biased toward polar residues.

This sequence belongs to the calcium channel subunit alpha-2/delta family.

The protein resides in the membrane. May regulate voltage-dependent calcium channels. This Homo sapiens (Human) protein is VWFA and cache domain-containing protein 1 (CACHD1).